A 190-amino-acid chain; its full sequence is Ribonuclease HII (190 aa).

The RNase H type-2 domain occupies 3 to 190 (KLIAGVDEVG…KPVKALLEEK (188 aa)). Positions 9, 10, and 101 each coordinate a divalent metal cation.

It belongs to the RNase HII family. Mn(2+) serves as cofactor. It depends on Mg(2+) as a cofactor.

It localises to the cytoplasm. The enzyme catalyses Endonucleolytic cleavage to 5'-phosphomonoester.. Endonuclease that specifically degrades the RNA of RNA-DNA hybrids. The polypeptide is Ribonuclease HII (Alteromonas mediterranea (strain DSM 17117 / CIP 110805 / LMG 28347 / Deep ecotype)).